Reading from the N-terminus, the 514-residue chain is Respiratory nitrate reductase 2 beta chain (514 aa).

3 4Fe-4S ferredoxin-type domains span residues 7–35 (VGMV…GREG), 174–205 (TFMM…KREE), and 207–236 (GIVL…FNWK). Residues cysteine 16, cysteine 19, cysteine 22, cysteine 26, cysteine 183, cysteine 186, and cysteine 191 each contribute to the [4Fe-4S] cluster site. Positions 195, 216, and 222 each coordinate [3Fe-4S] cluster. [4Fe-4S] cluster contacts are provided by cysteine 226, cysteine 243, cysteine 246, cysteine 258, and cysteine 262.

In terms of assembly, dimer of heterotrimers each composed of an alpha, a beta and a gamma chain. Alpha and beta are catalytic chains; gamma chains are involved in binding the enzyme complex to the cytoplasmic membrane. The cofactor is [4Fe-4S] cluster. Requires [3Fe-4S] cluster as cofactor.

It is found in the cell membrane. The enzyme catalyses nitrate + a quinol = a quinone + nitrite + H2O. Functionally, this is a second nitrate reductase enzyme which can substitute for the NRA enzyme and allows E.coli to use nitrate as an electron acceptor during anaerobic growth. The beta chain is an electron transfer unit containing four cysteine clusters involved in the formation of iron-sulfur centers. Electrons are transferred from the gamma chain to the molybdenum cofactor of the alpha subunit. In Escherichia coli (strain K12), this protein is Respiratory nitrate reductase 2 beta chain (narY).